Here is a 229-residue protein sequence, read N- to C-terminus: MEAEVEEEEEDMFEDAVCTTQARVNTPLSVITEAFEDLADLVKPQRSDEIDEDELRLDDFCSACTHVSVLFNCLGFAFKFAEMEYIAKVKDLVEASKTFETLHNILDLDVEKETVKTPGSHSRNLRRVRQGLDLIRAIFEQFLIADDYSLKDAATTAYTEVCAPFHTWAVRTAVYAGMYTLPTRDQLLLRLNETDQSVEKNMRRYMEASRPIIEYIDKLYIERNIKLDW.

Residues Glu84, Lys88, Arg123, Arg127, and His166 each contribute to the an N-acylsphingoid base 1-phosphate site.

It belongs to the GLTP family.

The protein is ACD11 homolog protein of Arabidopsis thaliana (Mouse-ear cress).